Reading from the N-terminus, the 293-residue chain is 3-methyl-2-oxobutanoate hydroxymethyltransferase (293 aa).

A disordered region spans residues 1–25 (MTDSPTAGTPYGTLPPASPLPQRRP). Mg(2+) contacts are provided by aspartate 67 and aspartate 110. Residues 67–68 (DS), aspartate 110, and lysine 139 contribute to the 3-methyl-2-oxobutanoate site. Residue glutamate 141 participates in Mg(2+) binding. The Proton acceptor role is filled by glutamate 208.

It belongs to the PanB family. As to quaternary structure, homodecamer; pentamer of dimers. It depends on Mg(2+) as a cofactor.

The protein localises to the cytoplasm. The enzyme catalyses 3-methyl-2-oxobutanoate + (6R)-5,10-methylene-5,6,7,8-tetrahydrofolate + H2O = 2-dehydropantoate + (6S)-5,6,7,8-tetrahydrofolate. The protein operates within cofactor biosynthesis; (R)-pantothenate biosynthesis; (R)-pantoate from 3-methyl-2-oxobutanoate: step 1/2. Its function is as follows. Catalyzes the reversible reaction in which hydroxymethyl group from 5,10-methylenetetrahydrofolate is transferred onto alpha-ketoisovalerate to form ketopantoate. The polypeptide is 3-methyl-2-oxobutanoate hydroxymethyltransferase (Acidovorax sp. (strain JS42)).